The sequence spans 835 residues: Phenylalanine--tRNA ligase beta subunit (835 aa).

Residues 44–160 (PETTGPLVFG…SYGEPGEDAR (117 aa)) form the tRNA-binding domain. In terms of domain architecture, B5 spans 419–494 (PAMQPITMKV…RLEGLEAIPT (76 aa)). Mg(2+) contacts are provided by aspartate 472, aspartate 478, glutamate 481, and glutamate 482. The region spanning 741-834 (SSFPALHQDI…AKEKFNAEMR (94 aa)) is the FDX-ACB domain.

The protein belongs to the phenylalanyl-tRNA synthetase beta subunit family. Type 1 subfamily. As to quaternary structure, tetramer of two alpha and two beta subunits. Mg(2+) serves as cofactor.

The protein resides in the cytoplasm. It catalyses the reaction tRNA(Phe) + L-phenylalanine + ATP = L-phenylalanyl-tRNA(Phe) + AMP + diphosphate + H(+). This chain is Phenylalanine--tRNA ligase beta subunit, found in Corynebacterium glutamicum (strain ATCC 13032 / DSM 20300 / JCM 1318 / BCRC 11384 / CCUG 27702 / LMG 3730 / NBRC 12168 / NCIMB 10025 / NRRL B-2784 / 534).